Reading from the N-terminus, the 61-residue chain is Probable tautomerase LL0574 (61 aa).

Pro-2 serves as the catalytic Proton acceptor; via imino nitrogen.

The protein belongs to the 4-oxalocrotonate tautomerase family.

In Lactococcus lactis subsp. lactis (strain IL1403) (Streptococcus lactis), this protein is Probable tautomerase LL0574.